A 55-amino-acid chain; its full sequence is uncharacterized protein (55 aa).

Residues 1-19 (MQILLVVRLVLLWLGGLSA) form the signal peptide.

This is an uncharacterized protein from Orgyia pseudotsugata multicapsid polyhedrosis virus (OpMNPV).